Here is a 328-residue protein sequence, read N- to C-terminus: uncharacterized protein (328 aa).

Positions Ala-296–Gly-328 are disordered. A compositionally biased stretch (acidic residues) spans Gly-299–Pro-310.

In terms of biological role, possibly necessary for replication. This is an uncharacterized protein from Halobacterium sp. (strain GN101).